The sequence spans 47 residues: uncharacterized protein (47 aa).

Residues Met-1 to Ala-18 form the signal peptide. The disordered stretch occupies residues Glu-28–Gln-47.

This is an uncharacterized protein from Haemophilus influenzae (strain ATCC 51907 / DSM 11121 / KW20 / Rd).